Reading from the N-terminus, the 469-residue chain is UDP-N-acetylmuramate--L-alanine ligase (469 aa).

ATP is bound at residue 114 to 120 (GTHGKTT).

This sequence belongs to the MurCDEF family.

It is found in the cytoplasm. The catalysed reaction is UDP-N-acetyl-alpha-D-muramate + L-alanine + ATP = UDP-N-acetyl-alpha-D-muramoyl-L-alanine + ADP + phosphate + H(+). It functions in the pathway cell wall biogenesis; peptidoglycan biosynthesis. Its function is as follows. Cell wall formation. The polypeptide is UDP-N-acetylmuramate--L-alanine ligase (Sinorhizobium fredii (strain NBRC 101917 / NGR234)).